Consider the following 523-residue polypeptide: MRILSWNVNGIQNPFNYFPWNKKNSYKEIFQELQADVICVQELKMQKDSFPQQYAVVEGFDSYFTFPKIRKGYSGVGFYVKKDVAIPVKAEEGITGILPVRGQKYSYSEAPEHEKIGFFPKDIDRKTANWIDSEGRCILLDFQMFILIGVYCPVNSGENRLEYRRAFYKALRERIERLIKEGNRKIILVGDVNILCNPIDTADQKDIIRESLIPSIMESRQWIRDLLLPSRLGLLLDIGRIQHPTRKGMFTCWNTRLNTRPTNYGTRIDYTLATPDLLPWVQDADIMAEVMGSDHCPVYLDLKEEYEGKKLSNFLSHSKEPPLLSTAHHSAYRPSKNIHSMFQHFNSMKKNKNNSPTQSENVSASASSGSSPTVSRANSVIDVDAYPPEKRRRKEQSKLLSFFAKQKEEKEETNKTEDVSIEVLDNNNESDIGLTVKKKVENGNAWKQIFSERAPPLCEGHKEPCKYLTVRKPGINYGRKFWICARPVGELIKNSNAVSEEDTQPFQCRFFIWDSDWRANSKD.

A Mg(2+)-binding site is contributed by Glu-42. Tyr-151 is an active-site residue. Positions 191, 193, and 294 each coordinate Mg(2+). Asp-191 acts as the Proton donor/acceptor in catalysis. Positions 348–392 (MKKNKNNSPTQSENVSASASSGSSPTVSRANSVIDVDAYPPEKRR) are disordered. A compositionally biased stretch (polar residues) spans 353–362 (NNSPTQSENV). Zn(2+)-binding residues include Cys-458, His-461, Cys-484, and Cys-508. The GRF-type zinc-finger motif lies at 458-517 (CEGHKEPCKYLTVRKPGINYGRKFWICARPVGELIKNSNAVSEEDTQPFQCRFFIWDSDW).

This sequence belongs to the DNA repair enzymes AP/ExoA family. It depends on Mg(2+) as a cofactor. Requires Mn(2+) as cofactor.

It is found in the nucleus. The enzyme catalyses Exonucleolytic cleavage in the 3'- to 5'-direction to yield nucleoside 5'-phosphates.. Its function is as follows. DNA repair enzyme that cleaves apurinic/apyrimidinic (AP) sites and removes 3'-blocking groups present at single strand breaks of damaged DNA. Provides the majority of the AP-endonuclease (APE) activity. Repairs phleomycin D1-induced DNA damage. Plays a role in oxidative damage repair. The polypeptide is DNA-(apurinic or apyrimidinic site) endonuclease 2 (apn2) (Schizosaccharomyces pombe (strain 972 / ATCC 24843) (Fission yeast)).